The chain runs to 1499 residues: Collagen alpha-2(V) chain (1499 aa).

The signal sequence occupies residues Met1–Ala26. Residues Ile39–Ser97 enclose the VWFC domain. The segment at Asn104–Val1268 is disordered. Residues Pro170–Pro182 are compositionally biased toward pro residues. Positions Pro212 to Gln227 are enriched in low complexity. Over residues Thr236–Met248 the composition is skewed to pro residues. Hydroxyproline is present on residues Pro290, Pro293, and Pro296. Low complexity-rich tracts occupy residues Glu322–Met340 and Thr427–Pro443. A Cell attachment site motif is present at residues Arg506–Asp508. 2 stretches are compositionally biased toward low complexity: residues Ser604–Pro626 and Asp694–Pro709. Residues Pro611 and Pro617 each carry the hydroxyproline modification. Residues Arg710–Glu721 are compositionally biased toward basic and acidic residues. Residues Gly732–Gly741 are compositionally biased toward gly residues. Residues Pro742–Pro758 are compositionally biased toward low complexity. Residues Lys776–Ala787 show a composition bias toward basic and acidic residues. Over residues Pro826 to Pro841 the composition is skewed to low complexity. Positions Gly894–Gly903 are enriched in gly residues. Pro919 carries the 3-hydroxyproline; partial modification. Residues Pro919–Ala929 are compositionally biased toward pro residues. 6 consecutive short sequence motifs (cell attachment site) follow at residues Arg944–Asp946, Arg1067–Asp1069, Arg1070–Asp1072, Arg1100–Asp1102, Arg1127–Asp1129, and Arg1136–Asp1138. Basic and acidic residues predominate over residues Ala1063–Asp1072. Low complexity predominate over residues Ala1093–Arg1114. A compositionally biased stretch (basic and acidic residues) spans Arg1127–Gln1141. Pro1156 is subject to 3-hydroxyproline; partial. Pro residues-rich tracts occupy residues Pro1171 to Val1181 and Glu1211 to Pro1226. Positions Thr1230–Val1499 are cleaved as a propeptide — C-terminal propeptide. The N-linked (GlcNAc...) asparagine glycan is linked to Asn1262. The region spanning Pro1266 to Val1499 is the Fibrillar collagen NC1 domain. Intrachain disulfides connect Cys1296-Cys1328, Cys1336-Cys1497, and Cys1405-Cys1450. 4 residues coordinate Ca(2+): Asp1314, Asn1316, Gln1317, and Asp1322. A glycan (N-linked (GlcNAc...) asparagine) is linked at Asn1400.

Belongs to the fibrillar collagen family. Trimers of two alpha 1(V) and one alpha 2(V) chains in most tissues and trimers of one alpha 1(V), one alpha 2(V), and one alpha 3(V) chains in placenta. Prolines at the third position of the tripeptide repeating unit (G-X-P) are hydroxylated in some or all of the chains. Probably 3-hydroxylated on Pro-919 and Pro-1156 by LEPREL1.

Its subcellular location is the secreted. The protein resides in the extracellular space. The protein localises to the extracellular matrix. Functionally, type V collagen is a member of group I collagen (fibrillar forming collagen). It is a minor connective tissue component of nearly ubiquitous distribution. Type V collagen binds to DNA, heparan sulfate, thrombospondin, heparin, and insulin. Type V collagen is a key determinant in the assembly of tissue-specific matrices. This is Collagen alpha-2(V) chain (COL5A2) from Homo sapiens (Human).